A 385-amino-acid chain; its full sequence is Glutamate 5-kinase (385 aa).

An ATP-binding site is contributed by Lys17. Substrate is bound by residues Ser64, Asp151, and Asn165. 185-186 is a binding site for ATP; that stretch reads SD. One can recognise a PUA domain in the interval 291–367; it reads SGTVRVDAGA…NQIDNILGYN (77 aa).

Belongs to the glutamate 5-kinase family.

The protein resides in the cytoplasm. It carries out the reaction L-glutamate + ATP = L-glutamyl 5-phosphate + ADP. It functions in the pathway amino-acid biosynthesis; L-proline biosynthesis; L-glutamate 5-semialdehyde from L-glutamate: step 1/2. In terms of biological role, catalyzes the transfer of a phosphate group to glutamate to form L-glutamate 5-phosphate. The protein is Glutamate 5-kinase of Methanosarcina acetivorans (strain ATCC 35395 / DSM 2834 / JCM 12185 / C2A).